The sequence spans 229 residues: MQRLAKLISNAGICSRRDAEKLILDGQVKVNGIIVTSPATNVDTDNQVEVSGSLITSSQKSRLWIYYKPVGLITTHKDPLSRKTVFEQLTGLPRVISIGRLDLNSEGLLLLTNNGDLARQFELPSSKLKRVYHVRAYGNPDPLLKSNYKNLEIDGIFYNPQSIKLLRKNSTNSWLEVILFEGKNREIRRIFEHFGLKVNKLIRTEYGDFKLDNLKPNEYREVTKKLYKC.

In terms of domain architecture, S4 RNA-binding spans 2-69 (QRLAKLISNA…KSRLWIYYKP (68 aa)). The Nucleophile role is filled by Asp102.

Belongs to the pseudouridine synthase RsuA family.

The enzyme catalyses a uridine in RNA = a pseudouridine in RNA. This is an uncharacterized protein from Rickettsia bellii (strain RML369-C).